A 144-amino-acid polypeptide reads, in one-letter code: Peroxisome assembly protein 22 (144 aa).

A helical membrane pass occupies residues 13 to 35 (YGAVSLASLLVAASIVAYRWWNA).

It belongs to the peroxin-22 family.

The protein resides in the peroxisome membrane. In terms of biological role, involved in peroxisome biogenesis. The polypeptide is Peroxisome assembly protein 22 (PEX22) (Eremothecium gossypii (strain ATCC 10895 / CBS 109.51 / FGSC 9923 / NRRL Y-1056) (Yeast)).